Reading from the N-terminus, the 496-residue chain is UDP-glycosyltransferase 84A2 (496 aa).

Catalysis depends on His23, which acts as the Proton acceptor. His23 contributes to the an anthocyanidin binding site. Residues Gln352, His367, Trp370, Asn371, Ser372, and Glu375 each coordinate UDP-alpha-D-glucose. Gly390 serves as a coordination point for an anthocyanidin. UDP-alpha-D-glucose is bound by residues Asp391 and Gln392.

This sequence belongs to the UDP-glycosyltransferase family. As to expression, expressed in roots, cotyledons, leaf veins and trichomes.

It catalyses the reaction (E)-sinapate + UDP-alpha-D-glucose = 1-O-(trans-sinapoyl)-beta-D-glucose + UDP. In terms of biological role, sinapate glucosyltransferase (SGT) required for the biosynthesis of the glucose ester sinapoylglucose and subsequently sinapoylmalate and sinapoylcholine. Is the major SGT activity in plant. Plays an important role in sinapoylation of anthocyanins. Sinapoylglucose produced by UGT84A2 is a significant source of sinapoyl moieties for anthocyanins. Indole-3-butyric acid (IBA)-specific glucosyltransferase that catalyzes the glucosylation of the auxin IBA, but not indole-3-acetic acid (IAA). May be involved in flowering regulation through IBA-mediated transcriptional repression of the auxin-response factors ARF6 and ARF8 and downstream flowering pathway genes. Can glucosylate the phytotoxic xenobiotic compound 2,4,5-trichlorophenol (TCP). In Arabidopsis thaliana (Mouse-ear cress), this protein is UDP-glycosyltransferase 84A2.